Consider the following 133-residue polypeptide: ATP synthase epsilon chain, chloroplastic (133 aa).

It belongs to the ATPase epsilon chain family. In terms of assembly, F-type ATPases have 2 components, CF(1) - the catalytic core - and CF(0) - the membrane proton channel. CF(1) has five subunits: alpha(3), beta(3), gamma(1), delta(1), epsilon(1). CF(0) has three main subunits: a, b and c.

Its subcellular location is the plastid. It localises to the chloroplast thylakoid membrane. Functionally, produces ATP from ADP in the presence of a proton gradient across the membrane. This Chara vulgaris (Common stonewort) protein is ATP synthase epsilon chain, chloroplastic.